Reading from the N-terminus, the 558-residue chain is Zinc finger protein piragua (558 aa).

A ZAD domain is found at S15–Q94. The Zn(2+) site is built by C17, C20, C67, and C70. Residues L132–D177 show a composition bias toward acidic residues. Residues L132 to M178 form a disordered region. C2H2-type zinc fingers lie at residues F208–H231, Y237–H260, Y266–H288, F294–H316, F322–H344, F350–H372, Y414–H436, F441–H464, and F468–H490.

Its function is as follows. May be involved in transcriptional regulation. The function of this protein is unclear. According to one report, it is required for development and viability since mutants display defects in several developmental morphogenetic processes including dorsal closure and head involution, and die by the first instar larval stage. It may also be involved in fwe-mediated cellular competition. However, according to another report, it is not required for development or viability since mutants have no visible phenotype and are fertile. The polypeptide is Zinc finger protein piragua (Drosophila melanogaster (Fruit fly)).